Reading from the N-terminus, the 152-residue chain is Ribosome maturation factor RimP (152 aa).

The protein belongs to the RimP family.

Its subcellular location is the cytoplasm. Required for maturation of 30S ribosomal subunits. This is Ribosome maturation factor RimP from Pseudothermotoga lettingae (strain ATCC BAA-301 / DSM 14385 / NBRC 107922 / TMO) (Thermotoga lettingae).